The sequence spans 804 residues: MDAQEKKYDASAITVLEGLQAVRERPGMYIGDTGVTGLHHLVYEVVDNSIDEAMAGFCTEVVVRILEDGGISVSDNGRGIPVQIHEKESAKQGREISALEVVLTVLHAGGKFDKDSYKVSGGLHGVGVSCVNALSEKFIANVFKDGQAYSMEFSKGAPLTALQVLGSTDKRGTEILFYPDPTVFSTCVFDRAILMKRLRELAFLNRGITIIFEDDRDAGFDKVTFFYEGGIQSFVSYLNQNKESLFPTPIYIQGSKRGDDGDIEFEAALQWNSGYSELIYSYANNIPTRQGGTHLTGFSTALTRAVNSYIKSHNLAKSDKLSLTGEDIREGLVAIVSVKVPNPQFEGQTKQKLGNSDVGSVAQQISGEVLTTFFEENPQIAKTIVDKVFVAAQAREAAKRARELTIRKSALDSARLPGKLVDCLEKDPEKCEMYIVEGDSAGGSAKQGRDRRFQAILPIRGKILNVEKARLQKIFQNQEIGSIIAALGCGIGTDNFNLSKLRYKRVIIMTDADVDGSHIRTLLLTFFYRHMSALIENGCVYIAQPPLYRVSKKKDFRYILSEKEMDGYLLNLGTRESRVVFDDTARELEGTALESFVNLILEVESFIIALEKRAIPFSEFLDMFRDGAYPLYYYPPESGKQGGNYLYSNEEKEAAVAANEEAAARIIELYKASAFEEIQHNLNEYGYDIRHYLHPKGTGITVSTEDSKTPNYTCYTLKEVIDYLKGLGRKGIEIQRYKGLGEMNADQLWDTTMNPEQRTLVRVSLKDAVEADHIFTMLMGEEVPPRREFIESHALSIRMSNLDI.

The Toprim domain maps to 431-546 (CEMYIVEGDS…NGCVYIAQPP (116 aa)). Mg(2+)-binding residues include glutamate 437, aspartate 511, and aspartate 513.

Belongs to the type II topoisomerase GyrB family. Heterotetramer, composed of two GyrA and two GyrB chains. In the heterotetramer, GyrA contains the active site tyrosine that forms a transient covalent intermediate with DNA, while GyrB binds cofactors and catalyzes ATP hydrolysis. It depends on Mg(2+) as a cofactor. Requires Mn(2+) as cofactor. Ca(2+) serves as cofactor.

The protein localises to the cytoplasm. The enzyme catalyses ATP-dependent breakage, passage and rejoining of double-stranded DNA.. Its function is as follows. A type II topoisomerase that negatively supercoils closed circular double-stranded (ds) DNA in an ATP-dependent manner to modulate DNA topology and maintain chromosomes in an underwound state. Negative supercoiling favors strand separation, and DNA replication, transcription, recombination and repair, all of which involve strand separation. Also able to catalyze the interconversion of other topological isomers of dsDNA rings, including catenanes and knotted rings. Type II topoisomerases break and join 2 DNA strands simultaneously in an ATP-dependent manner. This is DNA gyrase subunit B from Chlamydia muridarum (strain MoPn / Nigg).